A 189-amino-acid chain; its full sequence is Leucine repeat adapter protein 25 (189 aa).

Phosphoserine is present on serine 28. A disordered region spans residues 54–83; it reads ELSRAARAPDGPRHAAGAANAGPAAGPRRP. Low complexity predominate over residues 67–83; that stretch reads HAAGAANAGPAAGPRRP. The stretch at 86-114 is one LRR repeat; the sequence is LDSALAALRKEMVGLRQLDMSLLCQLWGL. The disordered stretch occupies residues 141–175; sequence DSSYPPDAGLSDDEEPPDASLPPDPPPLTVPQTHN. The span at 159–169 shows a compositional bias: pro residues; the sequence is ASLPPDPPPLT. Serine 188 is subject to Phosphoserine.

Belongs to the FAM89 family. Interacts with SKI. Interacts (via LRR repeat) with CDC42BPA (via AGC-kinase C-terminal domain), CDC42BPB (via AGC-kinase C-terminal domain) and LIMK1 (via LIM zinc-binding domains). Forms a tripartite complex with CDC42BPA, CDC42BPB and LIMK1.

It is found in the cytoplasm. Its subcellular location is the cell projection. The protein resides in the lamellipodium. Negatively regulates TGF-beta-induced signaling; in cooperation with SKI prevents the translocation of SMAD2 from the nucleus to the cytoplasm in response to TGF-beta. Acts as an adapter that mediates the specific recognition of LIMK1 by CDC42BPA and CDC42BPB in the lamellipodia. LRAP25-mediated CDC42BPA/CDC42BPB targeting to LIMK1 and the lamellipodium results in LIMK1 activation and the subsequent phosphorylation of CFL1 which is important for lamellipodial F-actin regulation. In Homo sapiens (Human), this protein is Leucine repeat adapter protein 25 (FAM89B).